Here is a 117-residue protein sequence, read N- to C-terminus: LIM and senescent cell antigen-like-containing domain protein 3 (117 aa).

The LIM zinc-binding domain occupies 70–117; it reads ATCERCKGGFAPAETIVNSNGELYHEQCFVCAQCFQQFPEGLFYEERT.

As to expression, detected in testis.

The protein localises to the cytoplasm. This is LIM and senescent cell antigen-like-containing domain protein 3 (LIMS3) from Homo sapiens (Human).